A 676-amino-acid chain; its full sequence is Envelope glycoprotein (676 aa).

Residues 1-32 (MGGLSLLQLPRDKFRKSSFFVWVIILFQKAFS) form the signal peptide. The tract at residues 33–185 (MPLGVVTNST…FAEGVIAFLI (153 aa)) is receptor binding. The Extracellular portion of the chain corresponds to 33–650 (MPLGVVTNST…DDNWWTGWRQ (618 aa)). Asn-40 carries an N-linked (GlcNAc...) asparagine; by host glycan. 5 disulfide bridges follow: Cys-53–Cys-609, Cys-108–Cys-135, Cys-121–Cys-147, Cys-511–Cys-556, and Cys-601–Cys-608. Asn-204, Asn-208, Asn-238, Asn-257, Asn-268, Asn-296, Asn-314, and Asn-366 each carry an N-linked (GlcNAc...) asparagine; by host glycan. Positions 305–485 (ELSFEALSLN…STSNGLITST (181 aa)) are mucin-like region. 2 disordered regions span residues 337–373 (RKYS…GRRV) and 404–461 (RPSS…LTTP). Composition is skewed to low complexity over residues 405 to 428 (PSSS…TPTT) and 449 to 461 (PGPT…LTTP). Asn-463 is a glycosylation site (N-linked (GlcNAc...) asparagine; by host). The segment at 524–539 (HNAAGIAWIPYFGPGA) is fusion peptide. A coiled-coil region spans residues 554 to 595 (LVCGLRQLANETTQALQLFLRATTELRTYTILNRKAIDFLLR). Residue Asn-563 is glycosylated (N-linked (GlcNAc...) asparagine; by host). Positions 615–634 (WTKNITDKINQIIHDFIDNP) form a coiled coil. Asn-618 is a glycosylation site (N-linked (GlcNAc...) asparagine; by host). Residues 651–671 (WIPAGIGITGIIIAIIALLCV) form a helical membrane-spanning segment. S-palmitoyl cysteine; by host attachment occurs at residues Cys-670 and Cys-672. The Cytoplasmic segment spans residues 672-676 (CKLLC).

It belongs to the filoviruses glycoprotein family. In terms of assembly, homotrimer; each monomer consists of a GP1 and a GP2 subunit linked by disulfide bonds. The resulting peplomers (GP1,2) protrude from the virus surface as spikes. Interacts with host integrin alpha-V/ITGAV. Interacts with host CLEC10A. Binds also to host CD209 and CLEC4M/DC-SIGN(R). Interacts with host FOLR1. Interacts with BST2; this interaction inhibits the antiviral effect of BST2 and this allows viral release from infected cells. Interacts with host FCN1; this interaction enhances viral entry. Interacts with host TLR4; this interaction induces cell death in T-lymphocytes or proinflammatory cytokines and SOCS1 production in monocytes. Interacts with host entry receptor NPC1. As to quaternary structure, GP1 and GP2delta are part of GP1,2delta soluble complexes released by ectodomain shedding. N-glycosylated. Post-translationally, O-glycosylated in the mucin-like region. In terms of processing, palmitoylation of GP2 is not required for its function. Specific enzymatic cleavages in vivo yield mature proteins. The precursor is processed into GP1 and GP2 by host cell furin in the trans Golgi, and maybe by other host proteases, to yield the mature GP1 and GP2 proteins. The cleavage site corresponds to the furin optimal cleavage sequence [KR]-X-[KR]-R. This cleavage does not seem to be required for function. After the internalization of the virus into cell endosomes, GP1 C-terminus is removed by the endosomal proteases cathepsin B, cathepsin L, or both, leaving a 19-kDa N-terminal fragment which is further digested by cathepsin B. Proteolytic processing of GP1,2 by host ADAM17 can remove the transmembrane anchor of GP2 and leads to shedding of complexes consisting in GP1 and truncated GP2 (GP1,2delta).

It localises to the virion membrane. The protein localises to the host cell membrane. The protein resides in the secreted. In terms of biological role, trimeric GP1,2 complexes form the virion surface spikes and mediate the viral entry processes, with GP1 acting as the receptor-binding subunit and GP2 as the membrane fusion subunit. At later times of infection, down-regulates the expression of various host cell surface molecules that are essential for immune surveillance and cell adhesion. Down-modulates several integrins including ITGA1, ITGA2, ITGA3, ITGA4, ITGA5, ITGA6, ITGAV and ITGB1. This decrease in cell adhesion molecules may lead to cell detachment, contributing to the disruption of blood vessel integrity and hemorrhages developed during infection (cytotoxicity). Interacts with host TLR4 and thereby stimulates the differentiation and activation of monocytes leading to bystander death of T-lymphocytes. Down-regulates as well the function of host natural killer cells. Counteracts the antiviral effect of host BST2/tetherin that restricts release of progeny virions from infected cells. However, cooperates with VP40 and host BST2 to activate canonical NF-kappa-B pathway in a manner dependent on neddylation. Functionally, functions as a decoy for anti-GP1,2 antibodies thereby contributing to viral immune evasion. Interacts and activates host macrophages and dendritic cells inducing up-regulation of cytokine transcription. This effect is mediated throught activation of host TLR4. Responsible for binding to the receptor(s) on target cells. Interacts with CD209/DC-SIGN and CLEC4M/DC-SIGNR which act as cofactors for virus entry into dendritic cells (DCs) and endothelial cells. Binding to the macrophage specific lectin CLEC10A also seems to enhance virus infectivity. Interaction with FOLR1/folate receptor alpha may be a cofactor for virus entry in some cell types, although results are contradictory. Members of the Tyro3 receptor tyrosine kinase family also seem to be cell entry factors in filovirus infection. Once attached, the virions are internalized through clathrin-dependent endocytosis and/or macropinocytosis. After internalization of the virus into the endosomes of the host cell, proteolysis of GP1 by two cysteine proteases, CTSB/cathepsin B and CTSL/cathepsin L removes the glycan cap and allows GP1 binding to the host entry receptor NPC1. NPC1-binding, Ca(2+) and acidic pH induce a conformational change of GP2, which unmasks its fusion peptide and permit membranes fusion. Its function is as follows. Acts as a class I viral fusion protein. Under the current model, the protein has at least 3 conformational states: pre-fusion native state, pre-hairpin intermediate state, and post-fusion hairpin state. During viral and target cell membrane fusion, the coiled coil regions (heptad repeats) assume a trimer-of-hairpins structure, positioning the fusion peptide in close proximity to the C-terminal region of the ectodomain. The formation of this structure appears to drive apposition and subsequent fusion of viral and target cell membranes. Responsible for penetration of the virus into the cell cytoplasm by mediating the fusion of the membrane of the endocytosed virus particle with the endosomal membrane. Low pH in endosomes induces an irreversible conformational change in GP2, releasing the fusion hydrophobic peptide. This chain is Envelope glycoprotein (GP), found in Sudan ebolavirus (strain Human/Uganda/Gulu/2000) (SEBOV).